The following is a 156-amino-acid chain: Cyanate hydratase (156 aa).

Catalysis depends on residues Arg-96, Glu-99, and Ser-122.

It belongs to the cyanase family.

It carries out the reaction cyanate + hydrogencarbonate + 3 H(+) = NH4(+) + 2 CO2. In terms of biological role, catalyzes the reaction of cyanate with bicarbonate to produce ammonia and carbon dioxide. This chain is Cyanate hydratase, found in Pseudomonas paraeruginosa (strain DSM 24068 / PA7) (Pseudomonas aeruginosa (strain PA7)).